The chain runs to 528 residues: Cytochrome P450 monooxygenase ppsD (528 aa).

The helical transmembrane segment at Leu2–Leu21 threads the bilayer. Asn137 carries an N-linked (GlcNAc...) asparagine glycan. Cys441 contacts heme. N-linked (GlcNAc...) asparagine glycosylation is found at Asn450 and Asn463.

This sequence belongs to the cytochrome P450 family. It depends on heme as a cofactor.

Its subcellular location is the membrane. In terms of biological role, cytochrome P450 monooxygenase; part of the gene cluster that mediates the biosynthesis of 2,4'-dihydroxy-3'-methoxypropiophenone. The first step of the pathway is the conversion of acetate into acetyl-CoA by the acyl-CoA ligase ppsA. Acetyl-CoA is then used as a starter unit by the polyketide synthase ppsB and condensed with 4 malonyl-CoA unit to produce the pentaketide backbone. During polyketide extension, the polykedite chain is probably reduced and dehydrated by the KR and PT domains, respectively. O-methylation seems to be catalyzed by an unknown methyltransferase rather than by the CMeT domain of ppsB. Two hydroxylations and one further decarboxylation step catalyzed by yet unknown enzymes are then required to yield 4'-hydroxy-3'-methoxypropiophenone. PpsC functions as a carrier protein to transport 4'-hydroxy-3'-methoxypropiophenone to a specific cell compartment in which 4'-hydroxy-3'-methoxypropiophenone is hydroxylated to 2,4'-dihydroxy-3'-methoxypropiophenone by a still to be identified enzyme. The sequence is that of Cytochrome P450 monooxygenase ppsD from Aspergillus oryzae (strain ATCC 42149 / RIB 40) (Yellow koji mold).